Reading from the N-terminus, the 137-residue chain is Basic phospholipase A2 homolog Pgo-K49 (137 aa).

An N-terminal signal peptide occupies residues 1 to 16 (MRTLLIVAVLLVGVEG). 7 disulfides stabilise this stretch: cysteine 42-cysteine 131, cysteine 44-cysteine 60, cysteine 59-cysteine 111, cysteine 65-cysteine 137, cysteine 66-cysteine 104, cysteine 73-cysteine 97, and cysteine 91-cysteine 102. Positions 121-133 (KKYKIHMKFFCKK) are important for membrane-damaging activities in eukaryotes and bacteria; heparin-binding.

In terms of tissue distribution, expressed by the venom gland.

The protein resides in the secreted. Snake venom phospholipase A2 homolog that lacks enzymatic activity. Is myotoxic. A model of myotoxic mechanism has been proposed: an apo Lys49-PLA2 is activated by the entrance of a hydrophobic molecule (e.g. fatty acid) at the hydrophobic channel of the protein leading to a reorientation of a monomer. This reorientation causes a transition between 'inactive' to 'active' states, causing alignment of C-terminal and membrane-docking sites (MDoS) side-by-side and putting the membrane-disruption sites (MDiS) in the same plane, exposed to solvent and in a symmetric position for both monomers. The MDoS region stabilizes the toxin on membrane by the interaction of charged residues with phospholipid head groups. Subsequently, the MDiS region destabilizes the membrane with penetration of hydrophobic residues. This insertion causes a disorganization of the membrane, allowing an uncontrolled influx of ions (i.e. calcium and sodium), and eventually triggering irreversible intracellular alterations and cell death. This is Basic phospholipase A2 homolog Pgo-K49 from Cerrophidion godmani (Porthidium godmani).